The sequence spans 434 residues: Glutamate-1-semialdehyde 2,1-aminomutase (434 aa).

The residue at position 270 (Lys-270) is an N6-(pyridoxal phosphate)lysine.

This sequence belongs to the class-III pyridoxal-phosphate-dependent aminotransferase family. HemL subfamily. In terms of assembly, homodimer. Requires pyridoxal 5'-phosphate as cofactor.

The protein resides in the cytoplasm. It catalyses the reaction (S)-4-amino-5-oxopentanoate = 5-aminolevulinate. It participates in porphyrin-containing compound metabolism; protoporphyrin-IX biosynthesis; 5-aminolevulinate from L-glutamyl-tRNA(Glu): step 2/2. The protein is Glutamate-1-semialdehyde 2,1-aminomutase of Pelotomaculum thermopropionicum (strain DSM 13744 / JCM 10971 / SI).